A 255-amino-acid polypeptide reads, in one-letter code: NAD-dependent protein deacylase (255 aa).

The region spanning 1–253 (MEFSDELLAS…PLLLQALRRS (253 aa)) is the Deacetylase sirtuin-type domain. 22-42 (GAGVSAESGIPTFRDALTGFW) lines the NAD(+) pocket. 2 residues coordinate substrate: Y67 and R70. 101–104 (QNVD) is a binding site for NAD(+). The active-site Proton acceptor is H119. Residues C127, C130, C155, and C158 each contribute to the Zn(2+) site. NAD(+) is bound by residues 195 to 197 (GTS), 221 to 223 (NPA), and A239.

It belongs to the sirtuin family. Class III subfamily. It depends on Zn(2+) as a cofactor.

The protein localises to the cytoplasm. The catalysed reaction is N(6)-acetyl-L-lysyl-[protein] + NAD(+) + H2O = 2''-O-acetyl-ADP-D-ribose + nicotinamide + L-lysyl-[protein]. It catalyses the reaction N(6)-succinyl-L-lysyl-[protein] + NAD(+) + H2O = 2''-O-succinyl-ADP-D-ribose + nicotinamide + L-lysyl-[protein]. NAD-dependent lysine deacetylase and desuccinylase that specifically removes acetyl and succinyl groups on target proteins. Modulates the activities of several proteins which are inactive in their acylated form. The chain is NAD-dependent protein deacylase from Methylococcus capsulatus (strain ATCC 33009 / NCIMB 11132 / Bath).